The primary structure comprises 360 residues: MCVEESEGAERLDFGEPAAAAADAGKSKSKSPDELPSPRMERVCENTTAADFKQNKSGNFVPNIRSGDWSDIGGRQYMEDTHVCITDLAKNFGYQSVDNEAISFYGVFDGHGGKDAAHFVRDNLPRIIVEDADFPLELEKVVRRSFVHADNQFAKTTLSSGTTALTAMIFGRTLLIANAGDCRAVLSRCGTAIEMSVDHRPCSLSEKLRVESLGGYVDDGYLNGLLGVTRALGDWHLEGMKEAGNPGGPLSAEPELKMITLTKDDEFLIIGSDGIWDVFSNQNVVDFARRRLQEHNDVKSCCREIVEEAIKRGATDNLTAVLVSFHLEAPPQVRVSRPGRVARSISAEGLNSLRTLLRNQ.

A disordered region spans residues 1–39 (MCVEESEGAERLDFGEPAAAAADAGKSKSKSPDELPSPR). Positions 65-325 (RSGDWSDIGG…DNLTAVLVSF (261 aa)) constitute a PPM-type phosphatase domain. Mn(2+) contacts are provided by aspartate 109, glycine 110, aspartate 273, and aspartate 316.

It belongs to the PP2C family. Mg(2+) serves as cofactor. The cofactor is Mn(2+).

The enzyme catalyses O-phospho-L-seryl-[protein] + H2O = L-seryl-[protein] + phosphate. It catalyses the reaction O-phospho-L-threonyl-[protein] + H2O = L-threonyl-[protein] + phosphate. In Oryza sativa subsp. japonica (Rice), this protein is Probable protein phosphatase 2C 54.